A 317-amino-acid chain; its full sequence is Transaldolase (317 aa).

The active-site Schiff-base intermediate with substrate is the Lys-132.

Belongs to the transaldolase family. Type 1 subfamily. In terms of assembly, homodimer.

Its subcellular location is the cytoplasm. The catalysed reaction is D-sedoheptulose 7-phosphate + D-glyceraldehyde 3-phosphate = D-erythrose 4-phosphate + beta-D-fructose 6-phosphate. Its pathway is carbohydrate degradation; pentose phosphate pathway; D-glyceraldehyde 3-phosphate and beta-D-fructose 6-phosphate from D-ribose 5-phosphate and D-xylulose 5-phosphate (non-oxidative stage): step 2/3. Functionally, transaldolase is important for the balance of metabolites in the pentose-phosphate pathway. The polypeptide is Transaldolase (Haemophilus influenzae (strain PittGG)).